We begin with the raw amino-acid sequence, 274 residues long: Karrikin insensitive 2 receptor IA (274 aa).

Serine 95 functions as the Nucleophile in the catalytic mechanism. Residues aspartate 217 and histidine 246 contribute to the active site.

Belongs to the AB hydrolase superfamily. As to quaternary structure, interacts with MAX2A and MAX2B in the presence of (-)-germacrene D, thus forming an E3 SCF ubiquitin ligase complex (ASK-cullin-F-box) containing MAX2A or MAX2B and KAI2IA recognizing SMAX1A; this leads to the subsequent degradation of the transcriptional corepressor SMAX1A, thus triggering the activation of a downstream signaling cascade. As to expression, strongly expressed in stigma.

It is found in the nucleus. Its subcellular location is the cytoplasm. Its activity is regulated as follows. Hydrolysis activity toward yoshimulactone green (YLG), a fluorescent agonist to strigolactone receptor, is inhibited by (-)-germacrene D and GR24, a synthetic strigolactone analog. Hydrolase involved in the olfaction of sesquiterpene volatile organic compounds (VOCs) during volatile plant communication in a MAX2 proteins-dependent manner. Acts as a karrikin-insensitive receptor that stereospecifically perceives and binds to (-)-germacrene D, particularly in stigmas, and triggers a signaling cascade influencing plant fitness, as the result of reproductive organ growth-promoting effect; this process involves an interaction with MAX2 proteins (e.g. MAX2A and MAX2B) and the subsequent degradation of SMAX1a, a transcriptional corepressor. The sequence is that of Karrikin insensitive 2 receptor IA from Petunia hybrida (Petunia).